Consider the following 1013-residue polypeptide: MKLLKPSWVNHNGKPIFSVDIHPDGTKFATGGQGQDSGKVVIWNMPPMLKEEDEKNENIPKMLCQMDNHLACVNCVRWSNNGAYLASGGDDKLIMVWKRSGYIGPSTVFGSSSKLANVEQWRCLSILRSHSGDVMDVAWSPHDAWLASCSVDNTVVIWNALKFPEIISTLRGHSGLVKGLTWDPVGKYIASQADDHSIKVWRTMDWQLETSITKPFDECGGTTHVLRLSWSPDGHYLVSAHAMNNSGPTAQIIERDGWKTNMDFVGHRKAVTVVKFNPKIFKKKQKNGSSTKTSCPYCCCAVGSKDRSLSVWLTCLKRPLVVIHELFDKSIMDISWTLNGLGILVCSMDGSVAYLDFSQDELGDPLSEEEKNNIHQSTYGKSLAITTEPQLPNTVIENPEMLKFQQRQQLQQDGEHMVQAQMEAPIHNMASMMNGESLEDIRKNLLKKQVETRTADGRRRITPLCIAQLDTGDFSTAFFNSIPISGSLPGSMMSSQSNQQLISLDSNTTSSSGALKSNVELVGNNTKPAEETANKESGNVSSSSPVAPTSITAQPKIEPMKALDSRFTERSKATSGTAGVAHLNQTAVDRLKEQNVTKDSKPRVVESSSDSEEKIPASKQLSKRKGEADADLAEKRKKGRPRKESQRLMSVSLTVQSQVASTSEKELTCVTTSSLTLRLPTPTPQKSFTLQLSSDPSMYIEVENEVKTVGGNKLSQLKCHREGKEWEAVLTSRIVAAAGSKEVVCVACEKRMLSIFSGSGRRIFPPIILPSPISTLQCTGSYVMALTAAAALSVWDVQNQNIIIKNESLQPLLSGNDLTVSQTLLTKRGIPVLSLSNGKAYCFSPSLSTWSLVSDKQDSLAQCADYRSCMPSQDAVMCSGPLAIIQGRVSNAGRQAAHLFTMPHLVQKETTMAYLENQVAAALMLQSSQEYRHWLLIYAQYLVNEGFEQRLREVCQDLLGPVHRSSDSQWESRILGLWKRELLKELLPLIGQNLRFQRLFTEYQEQLDILRDK.

WD repeat units follow at residues 11 to 53 (HNGK…KEED), 68 to 107 (NHLACVNCVRWSNNGAYLASGGDDKLIMVWKRSGYIGPST), 129 to 168 (SHSGDVMDVAWSPHDAWLASCSVDNTVVIWNALKFPEIIS), 172 to 211 (GHSGLVKGLTWDPVGKYIASQADDHSIKVWRTMDWQLETS), 220 to 263 (GGTT…TNMD), 266 to 322 (GHRK…PLVV), and 326 to 367 (LFDK…DPLS). Residues 529–648 (AEETANKESG…GRPRKESQRL (120 aa)) are disordered. Over residues 535 to 553 (KESGNVSSSSPVAPTSITA) the composition is skewed to polar residues. The segment covering 558–572 (EPMKALDSRFTERSK) has biased composition (basic and acidic residues). The span at 573 to 587 (ATSGTAGVAHLNQTA) shows a compositional bias: polar residues. Basic and acidic residues-rich tracts occupy residues 589 to 604 (DRLKEQNVTKDSKPRV) and 624 to 634 (RKGEADADLAE).

This sequence belongs to the WD repeat HIR1 family. In terms of assembly, interacts with histone H2A, histone H2B, histone H3 and histone H4.

It localises to the nucleus. Functionally, required for the periodic repression of histone gene transcription during the cell cycle. Required for replication-independent chromatin assembly. This Xenopus laevis (African clawed frog) protein is Protein HIRA (hira).